Consider the following 107-residue polypeptide: Urease subunit beta (107 aa).

This sequence belongs to the urease beta subunit family. Heterotrimer of UreA (gamma), UreB (beta) and UreC (alpha) subunits. Three heterotrimers associate to form the active enzyme.

The protein localises to the cytoplasm. It catalyses the reaction urea + 2 H2O + H(+) = hydrogencarbonate + 2 NH4(+). It participates in nitrogen metabolism; urea degradation; CO(2) and NH(3) from urea (urease route): step 1/1. In Teredinibacter turnerae (strain ATCC 39867 / T7901), this protein is Urease subunit beta.